A 292-amino-acid polypeptide reads, in one-letter code: MLGKIALEEAFALPRFEEKTRWWASLFSVDPEIEHADKYGVGYQILSYTAPGVQDIWDPVEAQAGEVGVDRILSIDYPFETFEDAAVVLRRDVQTYGFIGALVNDTQRTGPMGNNQEEAYNINDYIAEQIRDKPDRFGAFTLSMHNPQEAGRDNAARLFERNPTGTIYEKLGAFRDYDAKVKAEITDINKLRIENASWDIFWQTDTEAQALAVEDADVWFDGAEFYDNAAMQYVIAYGAKQADIYGPINHWFEDRLLGLAETCKWLVGPDLSFAHGVSLHVLGMTVNGVFDR.

Residue Cys-263 is part of the active site.

This sequence belongs to the metallo-dependent hydrolases superfamily. As to quaternary structure, homotetramer.

The enzyme catalyses 2,3-dihydroxybenzoate + H(+) = catechol + CO2. It participates in aromatic compound metabolism; benzoate degradation via hydroxylation. This is 2,3-dihydroxybenzoate decarboxylase from Aspergillus niger.